We begin with the raw amino-acid sequence, 473 residues long: Cytochrome c-552 (473 aa).

The N-terminal stretch at M1–A33 is a signal peptide. Heme c is bound at residue H93. Heme-binding residues include C121, C124, and K125. 6 residues coordinate heme c: C159, C162, H163, C201, C204, and H205. The Ca(2+) site is built by E207, Y208, K256, and Q258. Y208 serves as a coordination point for substrate. H259 is a binding site for substrate. Heme c is bound by residues H270, C277, C280, H281, H296, C309, C312, H313, and H388.

This sequence belongs to the cytochrome c-552 family. Ca(2+) is required as a cofactor. Requires heme c as cofactor.

The protein localises to the periplasm. The catalysed reaction is 6 Fe(III)-[cytochrome c] + NH4(+) + 2 H2O = 6 Fe(II)-[cytochrome c] + nitrite + 8 H(+). The protein operates within nitrogen metabolism; nitrate reduction (assimilation). In terms of biological role, catalyzes the reduction of nitrite to ammonia, consuming six electrons in the process. The sequence is that of Cytochrome c-552 from Shewanella sp. (strain ANA-3).